Consider the following 206-residue polypeptide: RILP-like protein 2 (206 aa).

The interval 1–29 (MEEPPLREEEEEEEEDEAGPEGALGKSPL) is disordered. Residues 8 to 19 (EEEEEEEEDEAG) show a composition bias toward acidic residues. Positions 19 to 108 (GPEGALGKSP…RREGSAAGPE (90 aa)) constitute an RH1 domain. Positions 67–159 (LEMLETLVNE…VQEELQCYKS (93 aa)) form a coiled coil. Positions 125 to 197 (RPRFTLQELR…KEEKTIIRKL (73 aa)) constitute an RH2 domain. The segment at 161–189 (LIPPREGPGGRREKEALFPRGSNANSNKE) is disordered. Positions 168-177 (PGGRREKEAL) are enriched in basic and acidic residues.

It belongs to the RILPL family. As to quaternary structure, homodimer. Interacts with RAC1. Interacts (via N-terminus) with MYO5A, the interaction is required for its role in dendrite formation. Interacts with RAB8A; interaction is dependent on the phosphorylation of RAB8A on 'Thr-72'. Interacts with RAB10 and RAB12; interaction is dependent on the phosphorylation of 'Thr-73' on RAB10 and 'Ser-105' on RAB12.

Its subcellular location is the cytoplasm. It is found in the cytosol. The protein localises to the cytoskeleton. The protein resides in the microtubule organizing center. It localises to the centrosome. Its subcellular location is the cell projection. It is found in the cilium. Its function is as follows. Involved in cell shape and neuronal morphogenesis, positively regulating the establishment and maintenance of dendritic spines. Plays a role in cellular protein transport, including protein transport away from primary cilia. May function via activation of RAC1 and PAK1. The polypeptide is RILP-like protein 2 (RILPL2) (Bos taurus (Bovine)).